Reading from the N-terminus, the 74-residue chain is Serine rich endogenous peptide 16 (74 aa).

A signal peptide spans 1 to 31; the sequence is MATKISHLVSLLLSLLLLLLFISSQVGFTEA. A disordered region spans residues 29–74; that stretch reads TEAKRDERKKMSSPPIPSPLIPSPPIPPPPPRFYVPPSKSRRGKGP. Pro residues predominate over residues 42–62; it reads PPIPSPLIPSPPIPPPPPRFY. Residues 60 to 74 carry the SCOOP motif motif; sequence RFYVPPSKSRRGKGP. A SxS motif essential for MIK2 binding motif is present at residues 66 to 68; sequence SKS.

It belongs to the serine rich endogenous peptide (SCOOP) phytocytokine family. In terms of assembly, interacts with MIK2 (via extracellular leucine-rich repeat domain); this interaction triggers the formation of complex between MIK2 and the BAK1/SERK3 and SERK4 coreceptors, and subsequent BAK1 activation by phosphorylation.

It localises to the cell membrane. The protein resides in the secreted. It is found in the extracellular space. The protein localises to the apoplast. Brassicaceae-specific phytocytokine (plant endogenous peptide released into the apoplast) perceived by MIK2 in a BAK1/SERK3 and SERK4 coreceptors-dependent manner, that modulates various physiological and antimicrobial processes including growth prevention and reactive oxygen species (ROS) response regulation. The polypeptide is Serine rich endogenous peptide 16 (Arabidopsis thaliana (Mouse-ear cress)).